The chain runs to 832 residues: DEAD-box ATP-dependent RNA helicase 13 (832 aa).

A compositionally biased stretch (pro residues) spans 1–12 (MAAAPPPPPPPQ). 2 disordered regions span residues 1–59 (MAAA…TMVE) and 91–173 (VEDL…DDNV). Residues 29-42 (RKGKKSRGAKKPRR) are compositionally biased toward basic residues. Over residues 43–55 (AAAAAAASTSSAG) the composition is skewed to low complexity. The span at 105–114 (QKKKKRKKRK) shows a compositional bias: basic residues. Acidic residues predominate over residues 128-137 (LVVECEEEGE). Residues 141–155 (KRVKKKRRSRKKRKV) show a composition bias toward basic residues. Basic and acidic residues predominate over residues 156 to 167 (KEMEEKMESKED). The short motif at 198–226 (YAWRELRLHPLLITAVRRLGFKEPTPIQK) is the Q motif element. The 218-residue stretch at 230–447 (PAAAHQGKDV…KLKRGLVTAK (218 aa)) folds into the Helicase ATP-binding domain. Residue 243–250 (AETGSGKT) coordinates ATP. The short motif at 371–374 (DEAD) is the DEAD box element. Residues 484–645 (KLEESFIECS…QFPVDHAYMP (162 aa)) enclose the Helicase C-terminal domain. The segment at 800–832 (RRLAENWRRKKQKEKKSTREQKRKEKRIAKERD) is disordered. Positions 814 to 832 (KKSTREQKRKEKRIAKERD) are enriched in basic and acidic residues.

It belongs to the DEAD box helicase family. DDX24/MAK5 subfamily.

The catalysed reaction is ATP + H2O = ADP + phosphate + H(+). The sequence is that of DEAD-box ATP-dependent RNA helicase 13 from Oryza sativa subsp. japonica (Rice).